Reading from the N-terminus, the 199-residue chain is Shikimate kinase (199 aa).

14 to 19 serves as a coordination point for ATP; that stretch reads GSGKST. A Mg(2+)-binding site is contributed by S18. Substrate-binding residues include D36, R60, and G82. Residue R120 participates in ATP binding. Position 147 (R147) interacts with substrate. The segment at 179 to 199 is disordered; sequence YVRRAEKNQNSHSQTKKQSRK.

This sequence belongs to the shikimate kinase family. Monomer. Mg(2+) is required as a cofactor.

It is found in the cytoplasm. It carries out the reaction shikimate + ATP = 3-phosphoshikimate + ADP + H(+). The protein operates within metabolic intermediate biosynthesis; chorismate biosynthesis; chorismate from D-erythrose 4-phosphate and phosphoenolpyruvate: step 5/7. Functionally, catalyzes the specific phosphorylation of the 3-hydroxyl group of shikimic acid using ATP as a cosubstrate. The polypeptide is Shikimate kinase (Chlorobium phaeobacteroides (strain BS1)).